Here is a 220-residue protein sequence, read N- to C-terminus: MKAQTKSKKVNKAWLHDHVNDTYVKLAQKEGYRARAAYKLKEIDEQLGLIKPGHVVVDLGSSPGAWSQYVRRRLSPDGAAVGQLNGVIIALDILPMEPIEGVTFLQGDFREEEVLAGLQEAVQARPVDVVVSDMAPNLSGVESVDAVRIAHLIELAVDFAVHHLKPEGALVVKLFHGSGYSQLVQLFKDTFRVVKPMKPKASRDKSSETFLVGMGLKRQG.

S-adenosyl-L-methionine is bound by residues glycine 64, tryptophan 66, aspartate 92, aspartate 108, and aspartate 133. Lysine 173 functions as the Proton acceptor in the catalytic mechanism.

This sequence belongs to the class I-like SAM-binding methyltransferase superfamily. RNA methyltransferase RlmE family.

The protein resides in the cytoplasm. The catalysed reaction is uridine(2552) in 23S rRNA + S-adenosyl-L-methionine = 2'-O-methyluridine(2552) in 23S rRNA + S-adenosyl-L-homocysteine + H(+). Functionally, specifically methylates the uridine in position 2552 of 23S rRNA at the 2'-O position of the ribose in the fully assembled 50S ribosomal subunit. The protein is Ribosomal RNA large subunit methyltransferase E of Acidovorax sp. (strain JS42).